Reading from the N-terminus, the 350-residue chain is tRNA uridine(34) hydroxylase (350 aa).

The region spanning 146-240 (DDPDAVFIDM…YARRAREQGL (95 aa)) is the Rhodanese domain. Cysteine 200 (cysteine persulfide intermediate) is an active-site residue. The segment covering 319-328 (RRRRAGRENG) has biased composition (basic and acidic residues). Residues 319 to 350 (RRRRAGRENGNKIFNKSRGRLNSKLSIPDPAE) form a disordered region.

The protein belongs to the TrhO family.

The catalysed reaction is uridine(34) in tRNA + AH2 + O2 = 5-hydroxyuridine(34) in tRNA + A + H2O. Catalyzes oxygen-dependent 5-hydroxyuridine (ho5U) modification at position 34 in tRNAs. This chain is tRNA uridine(34) hydroxylase, found in Salmonella agona (strain SL483).